A 970-amino-acid chain; its full sequence is Probable histidine kinase 6 (970 aa).

The Cytoplasmic segment spans residues 1–12; sequence MGKPEARSGWRN. The chain crosses the membrane as a helical span at residues 13–33; it reads AAAAAWVLVAVACAAYMHWHL. The Extracellular portion of the chain corresponds to 34–306; that stretch reads RRETMDRAEE…YRQKPPLPWS (273 aa). The region spanning 82-294 is the CHASE domain; it reads FPSAIDQDTF…GDPFRAHEMR (213 aa). Residues 307-327 form a helical membrane-spanning segment; that stretch reads AITNPLGTFVIWMLVGYIICA. Over 328–970 the chain is Cytoplasmic; sequence AWSRYDKVSE…LVVGTKESAV (643 aa). Positions 362 to 651 constitute a Histidine kinase domain; sequence TVSHEIRTPM…TFTFSAVLKR (290 aa). The residue at position 365 (His-365) is a Phosphohistidine; by autocatalysis. 2 Response regulatory domains span residues 676-802 and 827-962; these read KAIL…QQLL and NILI…SRLV. The residue at position 877 (Asp-877) is a 4-aspartylphosphate.

In terms of processing, activation probably requires a transfer of a phosphate group between a His in the transmitter domain and an Asp of the receiver domain. As to expression, highly expressed in spikelets and at lower levels in roots, young leaves, mature leaves and stems.

The protein resides in the cell membrane. The catalysed reaction is ATP + protein L-histidine = ADP + protein N-phospho-L-histidine.. In terms of biological role, cytokinin receptor related to bacterial two-component regulators. Functions as a histidine kinase and transmits the stress signal to a downstream MAPK cascade. The protein is Probable histidine kinase 6 of Oryza sativa subsp. japonica (Rice).